Reading from the N-terminus, the 82-residue chain is U1-theraphotoxin-Ct1b (82 aa).

Positions 1 to 23 (MRTFTLIAILTCALLVIYHAAEA) are cleaved as a signal peptide. Residues 24 to 44 (EELEAKDVIESKALATLDEER) constitute a propeptide that is removed on maturation.

Belongs to the neurotoxin 12 (Hwtx-2) family. 03 (juruin) subfamily. In terms of processing, contains 3 disulfide bonds. Two different connectivities are observed in similar proteins (C1-C3, C2-C5, C4-C6 or C1-C4, C2-C5, C3-C6). As to expression, expressed by the venom gland.

Its subcellular location is the secreted. In terms of biological role, this toxin causes paralysis and death to sheep blowflies. It does not target insect sodium channels. This Coremiocnemis tropix (Australian tarantula spider) protein is U1-theraphotoxin-Ct1b.